The chain runs to 403 residues: GPI mannosyltransferase 1 (403 aa).

Residues 1 to 4 are Cytoplasmic-facing; it reads MTGE. A helical transmembrane segment spans residues 5–25; it reads EWGLTVLSFLVRVGFFLFGIY. The Lumenal segment spans residues 26–78; the sequence is QDANFKVRYTDIDYFVFHDAAKYVYEGKSPYARDTYRYTPLLSWLLVPNHYFG. Residues 79–99 form a helical membrane-spanning segment; that stretch reads WFHLGKVIFVIFDLVTGLIIM. Topologically, residues 100 to 110 are cytoplasmic; that stretch reads KLLNQAISRKR. The helical transmembrane segment at 111–131 threads the bilayer; it reads ALILESIWLLNPMVITISTRG. Asparagine 132 is a topological domain (lumenal). Residues 133–149 traverse the membrane as a helical segment; sequence AESVLCCLIMFTLFFLQ. Topologically, residues 150-160 are cytoplasmic; sequence KSRYTLAGILY. A helical transmembrane segment spans residues 161 to 181; the sequence is GLSIHFKIYPIIYCIPIAIFI. The Lumenal portion of the chain corresponds to 182 to 193; it reads YYNKRNQGPRTQ. A helical membrane pass occupies residues 194-214; that stretch reads LTSLLNIGLSTLTTLLGCGWA. Topologically, residues 215–266 are cytoplasmic; that stretch reads MYKIYGYEFLDQAYLYHLYRTDHRHNFSVWNMLLYLDSANKENGESNLSRYA. A helical transmembrane segment spans residues 267–287; it reads FVPQLLLVLVTGCLEWWNPTF. Residues 288-310 lie on the Lumenal side of the membrane; the sequence is DNLLRVLFVQTFAFVTYNKVCTS. The helical transmembrane segment at 311–331 threads the bilayer; it reads QYFVWYLIFLPFYLSRTHIGW. The Cytoplasmic segment spans residues 332–334; it reads KKG. Residues 335–355 form a helical membrane-spanning segment; that stretch reads LLMATLWVGTQGIWLSQGYYL. Topologically, residues 356–361 are lumenal; sequence EFEGKN. Residues 362–382 form a helical membrane-spanning segment; the sequence is VFYPGLFIASVLFFVTNVWLL. Over 383–403 the chain is Cytoplasmic; that stretch reads GQFITDIKIPTQPTVSNKKNN.

The protein belongs to the PIGM family.

It localises to the endoplasmic reticulum membrane. Its pathway is glycolipid biosynthesis; glycosylphosphatidylinositol-anchor biosynthesis. Mannosyltransferase involved in glycosylphosphatidylinositol-anchor biosynthesis. Transfers the first alpha-1,4-mannose to GlcN-acyl-PI during GPI precursor assembly. Required for cell wall integrity. This is GPI mannosyltransferase 1 (GPI14) from Saccharomyces cerevisiae (strain ATCC 204508 / S288c) (Baker's yeast).